Here is a 486-residue protein sequence, read N- to C-terminus: Arginine/agmatine antiporter (486 aa).

12 consecutive transmembrane segments (helical) span residues 12–32 (LGAIALAGMVISSMIGGGIFS), 41–61 (AGAGAIILAWILTGIGMFFIA), 85–105 (GFGPYVGFTIGWGYWLCQIFG), 129–149 (NTIPAIIGGSILIWVFNFIVL), 161–181 (IGTICKLIPLLIFIIITAFFF), 211–231 (STMLVTLWAFIGIEGAVVMSA), 242–262 (ATILGFSGCLIVYVLLSLLPF), 296–316 (IGLLIAILSSWLSWTVIVAEI), 341–361 (VSLYITSALMQVAMLLVYFST), 367–387 (MLSITGVMVLPAYLASAAFLV), 418–438 (IWLIYAGGIKYLFMAIVLLAL), and 461–481 (EVTKITIIAFLALLAIFLFST).

Belongs to the amino acid-polyamine-organocation (APC) superfamily. Basic amino acid/polyamine antiporter (APA) (TC 2.A.3.2) family.

It localises to the cell inner membrane. In terms of biological role, catalyzes the exchange of L-arginine for agmatine. The arginine uptake by the bacterium in the macrophage may be a virulence factor against the host innate immune response. This is Arginine/agmatine antiporter (aaxC) from Chlamydia felis (strain Fe/C-56) (Chlamydophila felis).